The primary structure comprises 299 residues: UDP-N-acetylenolpyruvoylglucosamine reductase (299 aa).

Residues 28-193 enclose the FAD-binding PCMH-type domain; sequence IGGPVDLMVL…VSALMQLHKE (166 aa). Residue Arg-172 is part of the active site. The active-site Proton donor is Ser-222. Glu-292 is an active-site residue.

It belongs to the MurB family. Requires FAD as cofactor.

The protein resides in the cytoplasm. The catalysed reaction is UDP-N-acetyl-alpha-D-muramate + NADP(+) = UDP-N-acetyl-3-O-(1-carboxyvinyl)-alpha-D-glucosamine + NADPH + H(+). It participates in cell wall biogenesis; peptidoglycan biosynthesis. In terms of biological role, cell wall formation. In Syntrophomonas wolfei subsp. wolfei (strain DSM 2245B / Goettingen), this protein is UDP-N-acetylenolpyruvoylglucosamine reductase.